We begin with the raw amino-acid sequence, 169 residues long: Cell division inhibitor SulA (169 aa).

The tract at residues 106-112 is ftsZ binding; the sequence is ALRTGNY. Residues 162-169 are lon protease binding; that stretch reads KIHSNLYH.

The protein belongs to the SulA family. Interacts with FtsZ. Is rapidly cleaved and degraded by the Lon protease once DNA damage is repaired.

In terms of biological role, component of the SOS system and an inhibitor of cell division. Accumulation of SulA causes rapid cessation of cell division and the appearance of long, non-septate filaments. In the presence of GTP, binds a polymerization-competent form of FtsZ in a 1:1 ratio, thus inhibiting FtsZ polymerization and therefore preventing it from participating in the assembly of the Z ring. This mechanism prevents the premature segregation of damaged DNA to daughter cells during cell division. This chain is Cell division inhibitor SulA, found in Escherichia coli O45:K1 (strain S88 / ExPEC).